The primary structure comprises 171 residues: 3-hydroxydecanoyl-[acyl-carrier-protein] dehydratase (171 aa).

The active site involves H70.

Belongs to the thioester dehydratase family. FabA subfamily. In terms of assembly, homodimer.

It is found in the cytoplasm. The catalysed reaction is a (3R)-hydroxyacyl-[ACP] = a (2E)-enoyl-[ACP] + H2O. The enzyme catalyses (3R)-hydroxydecanoyl-[ACP] = (2E)-decenoyl-[ACP] + H2O. It catalyses the reaction (2E)-decenoyl-[ACP] = (3Z)-decenoyl-[ACP]. It functions in the pathway lipid metabolism; fatty acid biosynthesis. In terms of biological role, necessary for the introduction of cis unsaturation into fatty acids. Catalyzes the dehydration of (3R)-3-hydroxydecanoyl-ACP to E-(2)-decenoyl-ACP and then its isomerization to Z-(3)-decenoyl-ACP. Can catalyze the dehydratase reaction for beta-hydroxyacyl-ACPs with saturated chain lengths up to 16:0, being most active on intermediate chain length. This chain is 3-hydroxydecanoyl-[acyl-carrier-protein] dehydratase, found in Nitrosococcus oceani (strain ATCC 19707 / BCRC 17464 / JCM 30415 / NCIMB 11848 / C-107).